A 126-amino-acid chain; its full sequence is Glycine cleavage system H protein (126 aa).

Positions 22 to 104 constitute a Lipoyl-binding domain; it reads TVTIGITEYA…YEKAWMVKVE (83 aa). K63 carries the N6-lipoyllysine modification.

It belongs to the GcvH family. As to quaternary structure, the glycine cleavage system is composed of four proteins: P, T, L and H. Requires (R)-lipoate as cofactor.

The glycine cleavage system catalyzes the degradation of glycine. The H protein shuttles the methylamine group of glycine from the P protein to the T protein. Its function is as follows. Is also involved in protein lipoylation via its role as an octanoyl/lipoyl carrier protein intermediate. This Staphylococcus haemolyticus (strain JCSC1435) protein is Glycine cleavage system H protein.